The sequence spans 200 residues: Urease accessory protein UreG (200 aa).

8–15 (GPVGSGKT) is a binding site for GTP.

This sequence belongs to the SIMIBI class G3E GTPase family. UreG subfamily. In terms of assembly, homodimer. UreH, UreF and UreG form a complex that acts as a GTP-hydrolysis-dependent molecular chaperone, activating the urease apoprotein by helping to assemble the nickel containing metallocenter of UreC. The UreE protein probably delivers the nickel.

It localises to the cytoplasm. Functionally, facilitates the functional incorporation of the urease nickel metallocenter. This process requires GTP hydrolysis, probably effectuated by UreG. This Helicobacter hepaticus (strain ATCC 51449 / 3B1) protein is Urease accessory protein UreG.